The following is a 743-amino-acid chain: Beta-galactosidase (743 aa).

The active-site Proton donor is the Glu388. Glu453 functions as the Nucleophile in the catalytic mechanism.

Belongs to the glycosyl hydrolase 2 family. In terms of assembly, homodimer.

The catalysed reaction is Hydrolysis of terminal non-reducing beta-D-galactose residues in beta-D-galactosides.. Beta-galactosidase. The sequence is that of Beta-galactosidase (lacZ) from Thermoanaerobacter pseudethanolicus (strain ATCC 33223 / 39E) (Clostridium thermohydrosulfuricum).